Reading from the N-terminus, the 206-residue chain is Stage III sporulation protein AF (206 aa).

2 helical membrane passes run 1–21 and 34–54; these read MSFLTEWLTTIVLFILFAIVI and AKMVVSLLLIVVMLTPIFKLF.

It is found in the cell membrane. This chain is Stage III sporulation protein AF (spoIIIAF), found in Bacillus subtilis (strain 168).